We begin with the raw amino-acid sequence, 146 residues long: Large ribosomal subunit protein uL15 (146 aa).

Residues 18–45 (VLGRGLGCGKGKTSGRGHKGQKARSGCA) are disordered. A compositionally biased stretch (basic residues) spans 30 to 39 (TSGRGHKGQK).

The protein belongs to the universal ribosomal protein uL15 family. As to quaternary structure, part of the 50S ribosomal subunit.

Functionally, binds to the 23S rRNA. The chain is Large ribosomal subunit protein uL15 from Anaplasma marginale (strain St. Maries).